Consider the following 244-residue polypeptide: Glucosamine-6-phosphate deaminase (244 aa).

The active-site Proton acceptor; for enolization step is D67. Catalysis depends on N136, which acts as the For ring-opening step. H138 functions as the Proton acceptor; for ring-opening step in the catalytic mechanism. E143 (for ring-opening step) is an active-site residue.

It belongs to the glucosamine/galactosamine-6-phosphate isomerase family. NagB subfamily.

It carries out the reaction alpha-D-glucosamine 6-phosphate + H2O = beta-D-fructose 6-phosphate + NH4(+). It participates in amino-sugar metabolism; N-acetylneuraminate degradation; D-fructose 6-phosphate from N-acetylneuraminate: step 5/5. In terms of biological role, catalyzes the reversible isomerization-deamination of glucosamine 6-phosphate (GlcN6P) to form fructose 6-phosphate (Fru6P) and ammonium ion. The polypeptide is Glucosamine-6-phosphate deaminase (Clostridium botulinum (strain 657 / Type Ba4)).